A 102-amino-acid polypeptide reads, in one-letter code: Large ribosomal subunit protein bL21 (102 aa).

The protein belongs to the bacterial ribosomal protein bL21 family. Part of the 50S ribosomal subunit. Contacts protein L20.

Its function is as follows. This protein binds to 23S rRNA in the presence of protein L20. This Lawsonia intracellularis protein is Large ribosomal subunit protein bL21.